The sequence spans 342 residues: Isopentenyl-diphosphate delta-isomerase (342 aa).

Residue 11–12 (RK) participates in substrate binding. FMN is bound by residues Ser-68, 69 to 71 (SMT), Ser-99, and Asn-128. 99 to 101 (SQR) is a substrate binding site. Residue Gln-162 coordinates substrate. A Mg(2+)-binding site is contributed by Glu-163. FMN is bound by residues Lys-194, Ser-219, Thr-224, 275 to 277 (GVR), and 296 to 297 (AK).

This sequence belongs to the IPP isomerase type 2 family. As to quaternary structure, homooctamer. Dimer of tetramers. Requires FMN as cofactor. NADPH is required as a cofactor. The cofactor is Mg(2+).

It is found in the cytoplasm. The enzyme catalyses isopentenyl diphosphate = dimethylallyl diphosphate. Its function is as follows. Involved in the biosynthesis of isoprenoids. Catalyzes the 1,3-allylic rearrangement of the homoallylic substrate isopentenyl (IPP) to its allylic isomer, dimethylallyl diphosphate (DMAPP). The sequence is that of Isopentenyl-diphosphate delta-isomerase from Legionella pneumophila subsp. pneumophila (strain Philadelphia 1 / ATCC 33152 / DSM 7513).